We begin with the raw amino-acid sequence, 103 residues long: MGKLTLLLLAILVWLQYSLWFGKNGIHDYSRVNDDVAAQQATNAKLKARNDQLFAEIDDLNGGQEALEERARNELSMTKPGETFYRLVPDASKRAQTAGQNNR.

The Cytoplasmic segment spans residues 1-3 (MGK). A helical transmembrane segment spans residues 4–21 (LTLLLLAILVWLQYSLWF). Residues 22–103 (GKNGIHDYSR…RAQTAGQNNR (82 aa)) lie on the Periplasmic side of the membrane. A coiled-coil region spans residues 31–71 (RVNDDVAAQQATNAKLKARNDQLFAEIDDLNGGQEALEERA).

This sequence belongs to the FtsB family. As to quaternary structure, part of a complex composed of FtsB, FtsL and FtsQ.

Its subcellular location is the cell inner membrane. Functionally, essential cell division protein. May link together the upstream cell division proteins, which are predominantly cytoplasmic, with the downstream cell division proteins, which are predominantly periplasmic. The chain is Cell division protein FtsB from Escherichia fergusonii (strain ATCC 35469 / DSM 13698 / CCUG 18766 / IAM 14443 / JCM 21226 / LMG 7866 / NBRC 102419 / NCTC 12128 / CDC 0568-73).